Consider the following 430-residue polypeptide: Ribosomal protein uS12 methylthiotransferase RimO (430 aa).

Positions 2 to 119 constitute an MTTase N-terminal domain; it reads ISVYSISLGC…WPAMLAHALK (118 aa). [4Fe-4S] cluster contacts are provided by Cys-11, Cys-46, Cys-81, Cys-145, Cys-149, and Cys-152. Residues 131–361 form the Radical SAM core domain; sequence STGPSYAWLK…MEVQAEISEE (231 aa). Residues 364–430 enclose the TRAM domain; that stretch reads AVHEGTRQQV…TRTYDLVALA (67 aa).

This sequence belongs to the methylthiotransferase family. RimO subfamily. Requires [4Fe-4S] cluster as cofactor.

The protein localises to the cytoplasm. The enzyme catalyses L-aspartate(89)-[ribosomal protein uS12]-hydrogen + (sulfur carrier)-SH + AH2 + 2 S-adenosyl-L-methionine = 3-methylsulfanyl-L-aspartate(89)-[ribosomal protein uS12]-hydrogen + (sulfur carrier)-H + 5'-deoxyadenosine + L-methionine + A + S-adenosyl-L-homocysteine + 2 H(+). Catalyzes the methylthiolation of an aspartic acid residue of ribosomal protein uS12. This Nitratidesulfovibrio vulgaris (strain ATCC 29579 / DSM 644 / CCUG 34227 / NCIMB 8303 / VKM B-1760 / Hildenborough) (Desulfovibrio vulgaris) protein is Ribosomal protein uS12 methylthiotransferase RimO.